We begin with the raw amino-acid sequence, 177 residues long: ATP synthase subunit delta (177 aa).

The protein belongs to the ATPase delta chain family. In terms of assembly, F-type ATPases have 2 components, F(1) - the catalytic core - and F(0) - the membrane proton channel. F(1) has five subunits: alpha(3), beta(3), gamma(1), delta(1), epsilon(1). F(0) has three main subunits: a(1), b(2) and c(10-14). The alpha and beta chains form an alternating ring which encloses part of the gamma chain. F(1) is attached to F(0) by a central stalk formed by the gamma and epsilon chains, while a peripheral stalk is formed by the delta and b chains.

The protein localises to the cell inner membrane. In terms of biological role, f(1)F(0) ATP synthase produces ATP from ADP in the presence of a proton or sodium gradient. F-type ATPases consist of two structural domains, F(1) containing the extramembraneous catalytic core and F(0) containing the membrane proton channel, linked together by a central stalk and a peripheral stalk. During catalysis, ATP synthesis in the catalytic domain of F(1) is coupled via a rotary mechanism of the central stalk subunits to proton translocation. Its function is as follows. This protein is part of the stalk that links CF(0) to CF(1). It either transmits conformational changes from CF(0) to CF(1) or is implicated in proton conduction. The chain is ATP synthase subunit delta from Pseudoalteromonas translucida (strain TAC 125).